The following is a 143-amino-acid chain: Interleukin-4 (143 aa).

The N-terminal stretch at 1-19 is a signal peptide; the sequence is MGLSPQLAAVLLCLLVCTG. 2 disulfides stabilise this stretch: cysteine 48–cysteine 88 and cysteine 70–cysteine 115. Asparagine 62 and asparagine 91 each carry an N-linked (GlcNAc...) asparagine glycan.

The protein belongs to the IL-4/IL-13 family.

The protein localises to the secreted. Participates in at least several B-cell activation processes as well as of other cell types. It is a costimulator of DNA-synthesis. It induces the expression of class II MHC molecules on resting B-cells. It enhances both secretion and cell surface expression of IgE and IgG1. It also regulates the expression of the low affinity Fc receptor for IgE (CD23) on both lymphocytes and monocytes. Positively regulates IL31RA expression in macrophages. Stimulates autophagy in dendritic cells by interfering with mTORC1 signaling and through the induction of RUFY4. The polypeptide is Interleukin-4 (IL4) (Meriones unguiculatus (Mongolian jird)).